The chain runs to 207 residues: Cytochrome c biogenesis ATP-binding export protein CcmA (207 aa).

In terms of domain architecture, ABC transporter spans Leu4 to Ala207. ATP is bound at residue Gly36–Thr43.

This sequence belongs to the ABC transporter superfamily. CcmA exporter (TC 3.A.1.107) family. As to quaternary structure, the complex is composed of two ATP-binding proteins (CcmA) and two transmembrane proteins (CcmB).

It is found in the cell inner membrane. It carries out the reaction heme b(in) + ATP + H2O = heme b(out) + ADP + phosphate + H(+). Part of the ABC transporter complex CcmAB involved in the biogenesis of c-type cytochromes; once thought to export heme, this seems not to be the case, but its exact role is uncertain. Responsible for energy coupling to the transport system. The protein is Cytochrome c biogenesis ATP-binding export protein CcmA of Shigella boydii serotype 4 (strain Sb227).